Consider the following 1363-residue polypeptide: DNA-directed RNA polymerase subunit beta (1363 aa).

Belongs to the RNA polymerase beta chain family. The RNAP catalytic core consists of 2 alpha, 1 beta, 1 beta' and 1 omega subunit. When a sigma factor is associated with the core the holoenzyme is formed, which can initiate transcription.

The enzyme catalyses RNA(n) + a ribonucleoside 5'-triphosphate = RNA(n+1) + diphosphate. In terms of biological role, DNA-dependent RNA polymerase catalyzes the transcription of DNA into RNA using the four ribonucleoside triphosphates as substrates. The protein is DNA-directed RNA polymerase subunit beta of Pelagibacter ubique (strain HTCC1062).